The primary structure comprises 257 residues: MALAKRIIPCLDVTAGRVVKGVNFVELRDAGDPVEIARRYDDQGADELTFLDITATSDQRDLILPIIEAVASQVFIPLTVGGGVRAVEDVRRLLNAGADKVSMNSSAVANPQLVRDAADKYGSQCIVVAIDAKRVSADGETPRWEVFTHGGRKNTGLDAIEWARKMAELGAGEILLTSMDRDGTKSGFDLALTRGVSDAVPVPVIASGGVGSLQHLADGIKDGRADAVLAASIFHYGEHTVGEAKRFMSDQGIPVRL.

Active-site residues include Asp12 and Asp131.

The protein belongs to the HisA/HisF family. In terms of assembly, heterodimer of HisH and HisF.

It localises to the cytoplasm. The catalysed reaction is 5-[(5-phospho-1-deoxy-D-ribulos-1-ylimino)methylamino]-1-(5-phospho-beta-D-ribosyl)imidazole-4-carboxamide + L-glutamine = D-erythro-1-(imidazol-4-yl)glycerol 3-phosphate + 5-amino-1-(5-phospho-beta-D-ribosyl)imidazole-4-carboxamide + L-glutamate + H(+). It participates in amino-acid biosynthesis; L-histidine biosynthesis; L-histidine from 5-phospho-alpha-D-ribose 1-diphosphate: step 5/9. In terms of biological role, IGPS catalyzes the conversion of PRFAR and glutamine to IGP, AICAR and glutamate. The HisF subunit catalyzes the cyclization activity that produces IGP and AICAR from PRFAR using the ammonia provided by the HisH subunit. The sequence is that of Imidazole glycerol phosphate synthase subunit HisF from Burkholderia orbicola (strain MC0-3).